The primary structure comprises 392 residues: L-lactate dehydrogenase (392 aa).

The 380-residue stretch at 1–380 folds into the FMN hydroxy acid dehydrogenase domain; that stretch reads MIISASTDYR…GSDSLVTGSA (380 aa). Position 24 (tyrosine 24) interacts with substrate. FMN is bound by residues serine 106 and glutamine 127. Tyrosine 129 contacts substrate. Threonine 155 is a binding site for FMN. Arginine 164 contacts substrate. Residue lysine 251 coordinates FMN. Histidine 275 serves as the catalytic Proton acceptor. Arginine 278 is a binding site for substrate. Position 306 to 330 (306 to 330) interacts with FMN; it reads DSGVRNGLDVVRMIAMGADTILLGR.

This sequence belongs to the FMN-dependent alpha-hydroxy acid dehydrogenase family. FMN is required as a cofactor.

It is found in the cell inner membrane. The catalysed reaction is (S)-lactate + A = pyruvate + AH2. Functionally, catalyzes the conversion of L-lactate to pyruvate. Is coupled to the respiratory chain. In Chromohalobacter salexigens (strain ATCC BAA-138 / DSM 3043 / CIP 106854 / NCIMB 13768 / 1H11), this protein is L-lactate dehydrogenase.